Consider the following 168-residue polypeptide: Ribosome maturation factor RimM (168 aa).

The PRC barrel domain occupies 96 to 168 (VDEYYWGDLI…TIRVDWQKDW (73 aa)).

Belongs to the RimM family. Binds ribosomal protein uS19.

It localises to the cytoplasm. Functionally, an accessory protein needed during the final step in the assembly of 30S ribosomal subunit, possibly for assembly of the head region. Essential for efficient processing of 16S rRNA. May be needed both before and after RbfA during the maturation of 16S rRNA. It has affinity for free ribosomal 30S subunits but not for 70S ribosomes. This is Ribosome maturation factor RimM from Aromatoleum aromaticum (strain DSM 19018 / LMG 30748 / EbN1) (Azoarcus sp. (strain EbN1)).